Reading from the N-terminus, the 219-residue chain is Ribose-5-phosphate isomerase A (219 aa).

Residues 28 to 31 (TGST), 81 to 84 (DGAD), and 94 to 97 (KGGG) each bind substrate. Residue Glu103 is the Proton acceptor of the active site. Lys121 contacts substrate.

Belongs to the ribose 5-phosphate isomerase family. As to quaternary structure, homodimer.

It catalyses the reaction aldehydo-D-ribose 5-phosphate = D-ribulose 5-phosphate. It functions in the pathway carbohydrate degradation; pentose phosphate pathway; D-ribose 5-phosphate from D-ribulose 5-phosphate (non-oxidative stage): step 1/1. In terms of biological role, catalyzes the reversible conversion of ribose-5-phosphate to ribulose 5-phosphate. The protein is Ribose-5-phosphate isomerase A of Shewanella sp. (strain ANA-3).